A 211-amino-acid polypeptide reads, in one-letter code: Pyridoxine/pyridoxamine 5'-phosphate oxidase (211 aa).

Substrate-binding positions include 7–10 (RREY) and Lys65. Residues 60–65 (RIVLLK), 75–76 (YT), Arg81, Lys82, and Gln104 each bind FMN. Residues Tyr122, Arg126, and Ser130 each contribute to the substrate site. FMN is bound by residues 139 to 140 (QS) and Trp184. 190 to 192 (RLH) provides a ligand contact to substrate. Arg194 serves as a coordination point for FMN.

This sequence belongs to the pyridoxamine 5'-phosphate oxidase family. In terms of assembly, homodimer. It depends on FMN as a cofactor.

It catalyses the reaction pyridoxamine 5'-phosphate + O2 + H2O = pyridoxal 5'-phosphate + H2O2 + NH4(+). The catalysed reaction is pyridoxine 5'-phosphate + O2 = pyridoxal 5'-phosphate + H2O2. The protein operates within cofactor metabolism; pyridoxal 5'-phosphate salvage; pyridoxal 5'-phosphate from pyridoxamine 5'-phosphate: step 1/1. It functions in the pathway cofactor metabolism; pyridoxal 5'-phosphate salvage; pyridoxal 5'-phosphate from pyridoxine 5'-phosphate: step 1/1. Its function is as follows. Catalyzes the oxidation of either pyridoxine 5'-phosphate (PNP) or pyridoxamine 5'-phosphate (PMP) into pyridoxal 5'-phosphate (PLP). In Vibrio parahaemolyticus serotype O3:K6 (strain RIMD 2210633), this protein is Pyridoxine/pyridoxamine 5'-phosphate oxidase.